Reading from the N-terminus, the 153-residue chain is Flagellar assembly factor FliW (153 aa).

It belongs to the FliW family. Interacts with translational regulator CsrA and flagellin(s).

The protein resides in the cytoplasm. Its function is as follows. Acts as an anti-CsrA protein, binds CsrA and prevents it from repressing translation of its target genes, one of which is flagellin. Binds to flagellin and participates in the assembly of the flagellum. The chain is Flagellar assembly factor FliW from Leptospira biflexa serovar Patoc (strain Patoc 1 / Ames).